Here is a 460-residue protein sequence, read N- to C-terminus: Cysteine--tRNA ligase (460 aa).

Zn(2+) is bound at residue C29. The short motif at P31 to N41 is the 'HIGH' region element. The Zn(2+) site is built by C227, H252, and E256. Residues K285–S289 carry the 'KMSKS' region motif. K288 provides a ligand contact to ATP.

This sequence belongs to the class-I aminoacyl-tRNA synthetase family. As to quaternary structure, monomer. The cofactor is Zn(2+).

The protein localises to the cytoplasm. It catalyses the reaction tRNA(Cys) + L-cysteine + ATP = L-cysteinyl-tRNA(Cys) + AMP + diphosphate. This Bradyrhizobium diazoefficiens (strain JCM 10833 / BCRC 13528 / IAM 13628 / NBRC 14792 / USDA 110) protein is Cysteine--tRNA ligase.